The primary structure comprises 96 residues: Co-chaperonin GroES (96 aa).

Belongs to the GroES chaperonin family. In terms of assembly, heptamer of 7 subunits arranged in a ring. Interacts with the chaperonin GroEL.

It is found in the cytoplasm. Its function is as follows. Together with the chaperonin GroEL, plays an essential role in assisting protein folding. The GroEL-GroES system forms a nano-cage that allows encapsulation of the non-native substrate proteins and provides a physical environment optimized to promote and accelerate protein folding. GroES binds to the apical surface of the GroEL ring, thereby capping the opening of the GroEL channel. In Caulobacter sp. (strain K31), this protein is Co-chaperonin GroES.